The primary structure comprises 422 residues: Calpain-2 catalytic subunit (422 aa).

Residues 1–66 form the Calpain catalytic domain; sequence QKLIRIRNPW…YSRLEICNLT (66 aa). Asn-8 is an active-site residue. The Ca(2+) site is built by Glu-14, Asp-21, and Glu-45. The domain III stretch occupies residues 67 to 236; sequence PDTLTSDTYK…KKADYQAVDD (170 aa). The interval 237-251 is linker; the sequence is EIEADLEEADVSEDD. Residues 252-422 form a domain IV region; it reads IDDGFRRLFA…LISWLCFSVL (171 aa). Ca(2+) is bound by residues Ala-264, Asp-267, Glu-269, Glu-274, Asp-307, Asp-309, Thr-311, Lys-313, Glu-318, Asp-337, Asp-339, Ser-341, Thr-343, Glu-348, Asp-380, and Asn-383. EF-hand domains follow at residues 294–327 and 324–359; these read LSIE…TKIQ and TKIQ…AGFK. An EF-hand 3 domain is found at 389 to 422; it reads VRLETLFKIFKQLDPDNTGMIQLDLISWLCFSVL.

This sequence belongs to the peptidase C2 family. As to quaternary structure, forms a heterodimer with a small (regulatory) subunit (CAPNS1). Interacts with CPEB3; this leads to cleavage of CPEB3. Ca(2+) serves as cofactor. Ubiquitous.

It localises to the cytoplasm. Its subcellular location is the cell membrane. It carries out the reaction Broad endopeptidase specificity.. With respect to regulation, activated by 200-1000 micromolar concentrations of calcium and inhibited by calpastatin. Its function is as follows. Calcium-regulated non-lysosomal thiol-protease which catalyzes limited proteolysis of substrates involved in cytoskeletal remodeling and signal transduction. Proteolytically cleaves MYOC at 'Arg-226'. Proteolytically cleaves CPEB3 following neuronal stimulation which abolishes CPEB3 translational repressor activity, leading to translation of CPEB3 target mRNAs. The polypeptide is Calpain-2 catalytic subunit (CAPN2) (Oryctolagus cuniculus (Rabbit)).